A 120-amino-acid chain; its full sequence is Urease subunit beta (120 aa).

Belongs to the urease beta subunit family. As to quaternary structure, heterotrimer of UreA (gamma), UreB (beta) and UreC (alpha) subunits. Three heterotrimers associate to form the active enzyme.

It localises to the cytoplasm. The enzyme catalyses urea + 2 H2O + H(+) = hydrogencarbonate + 2 NH4(+). It functions in the pathway nitrogen metabolism; urea degradation; CO(2) and NH(3) from urea (urease route): step 1/1. The chain is Urease subunit beta from Corynebacterium efficiens (strain DSM 44549 / YS-314 / AJ 12310 / JCM 11189 / NBRC 100395).